Here is a 421-residue protein sequence, read N- to C-terminus: Gamma-glutamyl phosphate reductase (421 aa).

Belongs to the gamma-glutamyl phosphate reductase family.

The protein localises to the cytoplasm. It catalyses the reaction L-glutamate 5-semialdehyde + phosphate + NADP(+) = L-glutamyl 5-phosphate + NADPH + H(+). It participates in amino-acid biosynthesis; L-proline biosynthesis; L-glutamate 5-semialdehyde from L-glutamate: step 2/2. In terms of biological role, catalyzes the NADPH-dependent reduction of L-glutamate 5-phosphate into L-glutamate 5-semialdehyde and phosphate. The product spontaneously undergoes cyclization to form 1-pyrroline-5-carboxylate. The chain is Gamma-glutamyl phosphate reductase from Pseudomonas paraeruginosa (strain DSM 24068 / PA7) (Pseudomonas aeruginosa (strain PA7)).